The following is a 354-amino-acid chain: Uroporphyrinogen decarboxylase (354 aa).

Residues 27–31 (RQAGR), Asp-77, Tyr-154, Ser-209, and His-327 each bind substrate.

Belongs to the uroporphyrinogen decarboxylase family. Homodimer.

Its subcellular location is the cytoplasm. It catalyses the reaction uroporphyrinogen III + 4 H(+) = coproporphyrinogen III + 4 CO2. Its pathway is porphyrin-containing compound metabolism; protoporphyrin-IX biosynthesis; coproporphyrinogen-III from 5-aminolevulinate: step 4/4. In terms of biological role, catalyzes the decarboxylation of four acetate groups of uroporphyrinogen-III to yield coproporphyrinogen-III. The polypeptide is Uroporphyrinogen decarboxylase (Shewanella baltica (strain OS185)).